A 241-amino-acid chain; its full sequence is Class B acid phosphatase (241 aa).

The first 27 residues, 1 to 27, serve as a signal peptide directing secretion; sequence MFITTKKSLIALVLATAGLISSPVSFA. Catalysis depends on Asp72, which acts as the Nucleophile. Mg(2+) contacts are provided by Asp72 and Asp74. Asp74 serves as the catalytic Proton donor. Residues 141-142 and Lys181 each bind substrate; that span reads TG. Asp196 lines the Mg(2+) pocket.

Belongs to the class B bacterial acid phosphatase family. As to quaternary structure, homotetramer. Requires Mg(2+) as cofactor.

It localises to the periplasm. The enzyme catalyses a phosphate monoester + H2O = an alcohol + phosphate. Its function is as follows. Dephosphorylates several organic phosphate monoesters. Also has a phosphotransferase activity catalyzing the transfer of low-energy phosphate groups from organic phosphate monoesters to free hydroxyl groups of various organic compounds. This Edwardsiella ictaluri (strain 93-146) protein is Class B acid phosphatase.